The sequence spans 264 residues: Phosphate import ATP-binding protein PstB (264 aa).

One can recognise an ABC transporter domain in the interval 11 to 250 (LKAEALSVYY…DTTEKIFDSP (240 aa)). Residue 43–50 (GPSGCGKS) coordinates ATP.

The protein belongs to the ABC transporter superfamily. Phosphate importer (TC 3.A.1.7) family. In terms of assembly, the complex is composed of two ATP-binding proteins (PstB), two transmembrane proteins (PstC and PstA) and a solute-binding protein (PstS).

It localises to the cell inner membrane. The catalysed reaction is phosphate(out) + ATP + H2O = ADP + 2 phosphate(in) + H(+). Functionally, part of the ABC transporter complex PstSACB involved in phosphate import. Responsible for energy coupling to the transport system. This Synechococcus elongatus (strain ATCC 33912 / PCC 7942 / FACHB-805) (Anacystis nidulans R2) protein is Phosphate import ATP-binding protein PstB.